The chain runs to 228 residues: FCS-Like Zinc finger 12 (228 aa).

An FLZ-type zinc finger spans residues 162-205; the sequence is DFLTSCCLCKKKLQGKDIYMYKGDEGFCSKECRSLKIMEDSLKE.

It belongs to the FLZ family. Interacts with KIN10 and KIN11 via its FLZ-type zinc finger domain. Interacts with KINB1 and KINB2 via its N-terminal part. Forms homodimer and heterodimer with FLZ2 and FLZ10 in vitro.

Its function is as follows. May act as an adapter to facilitate the interaction of SnRK1 complex with effector proteins, conferring tissue- and stimulus-type specific differences in the SnRK1 regulation pathway. The chain is FCS-Like Zinc finger 12 from Arabidopsis thaliana (Mouse-ear cress).